The sequence spans 434 residues: MEKSVNVIGAGLAGSEAAWQLVKRGVKVDLYEMRPVKQTPAHHTDKFAELVCTNSLRANGLTNAVGVIKEEMRLLDSIIIESADKASVPAGGALAVDRHEFSGYITDKVKNHPLVTIHTEEVTSIPEGPTIIATGPLTSPALAEEIKRLTGEEYLYFYDAAAPIIEKDSIDMDKVYLKSRYDKGEAAYLNCPMSEEEFNTFYEALVTAETAALKEFEKEVFFEGCMPIEVMAKRGIKTMLFGPLKPVGLEDPKTGKRPYAVLQLRQDDAAGTLYNMVGFQTHLKWGEQKRVFGLIPGLENAEIVRYGVMHRNTFINSPTVLEPTYQLKTRNDLFFAGQMTGVEGYVESAASGLAAGINAANFVQDKEPIVFPPESAIGSLANYITSASKKSFQPMNVNFGLFPELPTKIRAKQERNEKLAERALDAIKKVAEQL.

9–14 (GAGLAG) provides a ligand contact to FAD.

The protein belongs to the MnmG family. TrmFO subfamily. FAD serves as cofactor.

The protein localises to the cytoplasm. The catalysed reaction is uridine(54) in tRNA + (6R)-5,10-methylene-5,6,7,8-tetrahydrofolate + NADH + H(+) = 5-methyluridine(54) in tRNA + (6S)-5,6,7,8-tetrahydrofolate + NAD(+). The enzyme catalyses uridine(54) in tRNA + (6R)-5,10-methylene-5,6,7,8-tetrahydrofolate + NADPH + H(+) = 5-methyluridine(54) in tRNA + (6S)-5,6,7,8-tetrahydrofolate + NADP(+). In terms of biological role, catalyzes the folate-dependent formation of 5-methyl-uridine at position 54 (M-5-U54) in all tRNAs. This is Methylenetetrahydrofolate--tRNA-(uracil-5-)-methyltransferase TrmFO from Listeria innocua serovar 6a (strain ATCC BAA-680 / CLIP 11262).